The sequence spans 247 residues: Ribosomal RNA small subunit methyltransferase J (247 aa).

Residues 101-102, 117-118, 153-154, and D171 each bind S-adenosyl-L-methionine; these read RD, ER, and SS.

The protein belongs to the methyltransferase superfamily. RsmJ family.

Its subcellular location is the cytoplasm. The catalysed reaction is guanosine(1516) in 16S rRNA + S-adenosyl-L-methionine = N(2)-methylguanosine(1516) in 16S rRNA + S-adenosyl-L-homocysteine + H(+). Functionally, specifically methylates the guanosine in position 1516 of 16S rRNA. The chain is Ribosomal RNA small subunit methyltransferase J from Photorhabdus laumondii subsp. laumondii (strain DSM 15139 / CIP 105565 / TT01) (Photorhabdus luminescens subsp. laumondii).